The following is a 284-amino-acid chain: D-tagatose-1,6-bisphosphate aldolase subunit GatY (284 aa).

Residue aspartate 82 is the Proton donor of the active site. Positions 83 and 180 each coordinate Zn(2+). Glycine 181 contributes to the dihydroxyacetone phosphate binding site. Histidine 208 is a Zn(2+) binding site. Dihydroxyacetone phosphate is bound by residues 209–211 (GAS) and 230–233 (NVAT).

This sequence belongs to the class II fructose-bisphosphate aldolase family. TagBP aldolase GatY subfamily. As to quaternary structure, forms a complex with GatZ. It depends on Zn(2+) as a cofactor.

It catalyses the reaction D-tagatofuranose 1,6-bisphosphate = D-glyceraldehyde 3-phosphate + dihydroxyacetone phosphate. It functions in the pathway carbohydrate metabolism; D-tagatose 6-phosphate degradation; D-glyceraldehyde 3-phosphate and glycerone phosphate from D-tagatose 6-phosphate: step 2/2. Its function is as follows. Catalytic subunit of the tagatose-1,6-bisphosphate aldolase GatYZ, which catalyzes the reversible aldol condensation of dihydroxyacetone phosphate (DHAP or glycerone-phosphate) with glyceraldehyde 3-phosphate (G3P) to produce tagatose 1,6-bisphosphate (TBP). Requires GatZ subunit for full activity and stability. Is involved in the catabolism of galactitol. The polypeptide is D-tagatose-1,6-bisphosphate aldolase subunit GatY (Shigella sonnei (strain Ss046)).